Reading from the N-terminus, the 72-residue chain is Translation initiation factor IF-1 (72 aa).

Residues 1-72 form the S1-like domain; that stretch reads MAKDDVIEVE…TRGRITYRYK (72 aa). Position 60 is a phosphotyrosine (Y60).

It belongs to the IF-1 family. In terms of assembly, component of the 30S ribosomal translation pre-initiation complex which assembles on the 30S ribosome in the order IF-2 and IF-3, IF-1 and N-formylmethionyl-tRNA(fMet); mRNA recruitment can occur at any time during PIC assembly.

The protein localises to the cytoplasm. In terms of biological role, one of the essential components for the initiation of protein synthesis. Stabilizes the binding of IF-2 and IF-3 on the 30S subunit to which N-formylmethionyl-tRNA(fMet) subsequently binds. Helps modulate mRNA selection, yielding the 30S pre-initiation complex (PIC). Upon addition of the 50S ribosomal subunit IF-1, IF-2 and IF-3 are released leaving the mature 70S translation initiation complex. This is Translation initiation factor IF-1 from Geobacillus kaustophilus (strain HTA426).